A 362-amino-acid chain; its full sequence is Peptide chain release factor 1 (362 aa).

Glutamine 237 carries the N5-methylglutamine modification.

The protein belongs to the prokaryotic/mitochondrial release factor family. In terms of processing, methylated by PrmC. Methylation increases the termination efficiency of RF1.

Its subcellular location is the cytoplasm. In terms of biological role, peptide chain release factor 1 directs the termination of translation in response to the peptide chain termination codons UAG and UAA. The sequence is that of Peptide chain release factor 1 from Vibrio campbellii (strain ATCC BAA-1116).